Consider the following 61-residue polypeptide: Small ribosomal subunit protein uS14B (61 aa).

Zn(2+) is bound by residues cysteine 24, cysteine 27, cysteine 40, and cysteine 43.

This sequence belongs to the universal ribosomal protein uS14 family. Zinc-binding uS14 subfamily. As to quaternary structure, part of the 30S ribosomal subunit. Contacts proteins S3 and S10. The cofactor is Zn(2+).

Its function is as follows. Binds 16S rRNA, required for the assembly of 30S particles and may also be responsible for determining the conformation of the 16S rRNA at the A site. This chain is Small ribosomal subunit protein uS14B, found in Mycolicibacterium gilvum (strain PYR-GCK) (Mycobacterium gilvum (strain PYR-GCK)).